A 644-amino-acid chain; its full sequence is 3D-(3,5/4)-trihydroxycyclohexane-1,2-dione hydrolase (644 aa).

Position 65 (Glu65) interacts with thiamine diphosphate. The interval 442 to 522 is thiamine pyrophosphate binding; it reads SLPGDLHKVW…INILLFDNAG (81 aa). Positions 493 and 520 each coordinate Mg(2+).

It belongs to the TPP enzyme family. The cofactor is Mg(2+). Thiamine diphosphate is required as a cofactor.

The enzyme catalyses 3D-3,5/4-trihydroxycyclohexane-1,2-dione + H2O = 5-deoxy-D-glucuronate + H(+). It participates in polyol metabolism; myo-inositol degradation into acetyl-CoA; acetyl-CoA from myo-inositol: step 3/7. Its function is as follows. Involved in the cleavage of the C1-C2 bond of 3D-(3,5/4)-trihydroxycyclohexane-1,2-dione (THcHDO) to yield 5-deoxy-glucuronate (5DG). This Clostridium tetani (strain Massachusetts / E88) protein is 3D-(3,5/4)-trihydroxycyclohexane-1,2-dione hydrolase.